The chain runs to 247 residues: Carboxy-S-adenosyl-L-methionine synthase (247 aa).

Residues Y40, 65–67 (GSS), 90–91 (DN), 122–123 (DI), N137, and R204 each bind S-adenosyl-L-methionine.

It belongs to the class I-like SAM-binding methyltransferase superfamily. Cx-SAM synthase family. Homodimer.

The catalysed reaction is prephenate + S-adenosyl-L-methionine = carboxy-S-adenosyl-L-methionine + 3-phenylpyruvate + H2O. Catalyzes the conversion of S-adenosyl-L-methionine (SAM) to carboxy-S-adenosyl-L-methionine (Cx-SAM). This is Carboxy-S-adenosyl-L-methionine synthase from Pseudomonas savastanoi pv. phaseolicola (strain 1448A / Race 6) (Pseudomonas syringae pv. phaseolicola (strain 1448A / Race 6)).